Reading from the N-terminus, the 93-residue chain is Ferredoxin-2 (93 aa).

The 2Fe-2S ferredoxin-type domain maps to 2 to 91; the sequence is YKVTLKTPDG…DVVIETHKED (90 aa). Positions 37, 42, 45, and 75 each coordinate [2Fe-2S] cluster.

This sequence belongs to the 2Fe2S plant-type ferredoxin family. The cofactor is [2Fe-2S] cluster.

It is found in the plastid. The protein resides in the chloroplast. Functionally, ferredoxins are iron-sulfur proteins that transfer electrons in a wide variety of metabolic reactions. The protein is Ferredoxin-2 of Equisetum arvense (Field horsetail).